A 251-amino-acid polypeptide reads, in one-letter code: 5'-nucleotidase SurE (251 aa).

A divalent metal cation-binding residues include Asp8, Asp9, Ser39, and Asn91.

Belongs to the SurE nucleotidase family. A divalent metal cation is required as a cofactor.

The protein resides in the cytoplasm. It catalyses the reaction a ribonucleoside 5'-phosphate + H2O = a ribonucleoside + phosphate. Its function is as follows. Nucleotidase that shows phosphatase activity on nucleoside 5'-monophosphates. The sequence is that of 5'-nucleotidase SurE from Halorhodospira halophila (strain DSM 244 / SL1) (Ectothiorhodospira halophila (strain DSM 244 / SL1)).